A 248-amino-acid chain; its full sequence is (2S)-[(R)-hydroxy(phenyl)methyl]succinyl-CoA dehydrogenase subunit BbsD (248 aa).

Positions 15, 36, 62, 63, 89, 153, and 157 each coordinate NAD(+). Residue tyrosine 153 is the Proton acceptor of the active site.

It belongs to the short-chain dehydrogenases/reductases (SDR) family. In terms of assembly, heterotetramer composed of 2 inactive BbsC subunits and 2 active BbsD subunits.

It carries out the reaction (2S)-[(R)-hydroxy(phenyl)methyl]succinyl-CoA + NAD(+) = (S)-2-benzoylsuccinyl-CoA + NADH + H(+). The protein operates within xenobiotic degradation; toluene degradation. Its activity is regulated as follows. Activity is probably regulated by the inactive BbsC subunit. Its function is as follows. Involved in an anaerobic toluene degradation pathway. Active subunit that catalyzes the oxidation of 2-(alpha-hydroxybenzyl)succinyl-CoA to 2-benzoylsuccinyl-CoA. In vitro, can catalyze the NADH-dependent reduction of the artificial substrates 2,2-dichloroacetophene and 2,4'-dichloroacetophenone. This Thauera aromatica protein is (2S)-[(R)-hydroxy(phenyl)methyl]succinyl-CoA dehydrogenase subunit BbsD.